The chain runs to 222 residues: Thymidylate kinase (222 aa).

7 to 14 provides a ligand contact to ATP; it reads GIDGAGKS.

It belongs to the thymidylate kinase family.

It carries out the reaction dTMP + ATP = dTDP + ADP. Functionally, phosphorylation of dTMP to form dTDP in both de novo and salvage pathways of dTTP synthesis. This chain is Thymidylate kinase, found in Chlorobium chlorochromatii (strain CaD3).